A 306-amino-acid polypeptide reads, in one-letter code: tRNA-cytidine(32) 2-sulfurtransferase (306 aa).

A disordered region spans residues 1-25 (MSAVISLPDPQPRAARDPRVAEREQ). Residues 14–25 (AARDPRVAEREQ) show a composition bias toward basic and acidic residues. The short motif at 57–62 (SGGKDS) is the PP-loop motif element. [4Fe-4S] cluster is bound by residues Cys-132, Cys-135, and Cys-223. Residues 286 to 306 (AHAWLAGSPADADADPETPTV) are disordered. A compositionally biased stretch (acidic residues) spans 297–306 (ADADPETPTV).

It belongs to the TtcA family. In terms of assembly, homodimer. Requires Mg(2+) as cofactor. It depends on [4Fe-4S] cluster as a cofactor.

Its subcellular location is the cytoplasm. It catalyses the reaction cytidine(32) in tRNA + S-sulfanyl-L-cysteinyl-[cysteine desulfurase] + AH2 + ATP = 2-thiocytidine(32) in tRNA + L-cysteinyl-[cysteine desulfurase] + A + AMP + diphosphate + H(+). The protein operates within tRNA modification. In terms of biological role, catalyzes the ATP-dependent 2-thiolation of cytidine in position 32 of tRNA, to form 2-thiocytidine (s(2)C32). The sulfur atoms are provided by the cysteine/cysteine desulfurase (IscS) system. In Stenotrophomonas maltophilia (strain K279a), this protein is tRNA-cytidine(32) 2-sulfurtransferase.